Consider the following 554-residue polypeptide: Arginine--tRNA ligase (554 aa).

The 'HIGH' region motif lies at 129–139 (ANPTGPLHIGH).

This sequence belongs to the class-I aminoacyl-tRNA synthetase family. Monomer.

The protein resides in the cytoplasm. It catalyses the reaction tRNA(Arg) + L-arginine + ATP = L-arginyl-tRNA(Arg) + AMP + diphosphate. The chain is Arginine--tRNA ligase from Geobacter sp. (strain M21).